The primary structure comprises 176 residues: Late lactation protein A (176 aa).

The N-terminal stretch at methionine 1–alanine 18 is a signal peptide. An intrachain disulfide couples cysteine 78 to cysteine 171.

It belongs to the calycin superfamily. Lipocalin family. Mammary gland specific. Secreted in milk.

The protein localises to the secreted. Probably serves a role in the transport of a small ligand released during the hydrolysis of milk fat. The chain is Late lactation protein A (LLPA) from Notamacropus eugenii (Tammar wallaby).